The following is a 300-amino-acid chain: Ribonuclease HIII (300 aa).

In terms of domain architecture, RNase H type-2 spans 83–300; it reads IPIIGSDEVG…THKAQALLTK (218 aa). Residues aspartate 89, glutamate 90, and aspartate 194 each contribute to the a divalent metal cation site.

It belongs to the RNase HII family. RnhC subfamily. Mn(2+) serves as cofactor. The cofactor is Mg(2+).

Its subcellular location is the cytoplasm. It catalyses the reaction Endonucleolytic cleavage to 5'-phosphomonoester.. Its function is as follows. Endonuclease that specifically degrades the RNA of RNA-DNA hybrids. This chain is Ribonuclease HIII, found in Streptococcus pyogenes serotype M2 (strain MGAS10270).